The sequence spans 790 residues: Cadherin-6 (790 aa).

An N-terminal signal peptide occupies residues 1–18 (MRTYRYFLLLFWVGQPYP). Residues 19 to 53 (TLSTPLSKRTSGFPAKKRALELSGNSKNELNRSKR) constitute a propeptide that is removed on maturation. Asparagine 49 carries an N-linked (GlcNAc...) asparagine glycan. 5 Cadherin domains span residues 54 to 159 (SWMW…EPIF), 160 to 268 (TKEV…PPRF), 269 to 383 (PQST…PPVF), 384 to 486 (SKLA…DNAP), and 487 to 608 (EFAE…LIHP). Topologically, residues 54–615 (SWMWNQFFLL…IHPTGLSTGA (562 aa)) are extracellular. An N-linked (GlcNAc...) asparagine glycan is attached at asparagine 255. Residues 259–288 (TDVNDNPPRFPQSTYQFKTPESSPPGTPIG) are disordered. The segment covering 269 to 279 (PQSTYQFKTPE) has biased composition (polar residues). 4 N-linked (GlcNAc...) asparagine glycosylation sites follow: asparagine 399, asparagine 437, asparagine 455, and asparagine 536. The chain crosses the membrane as a helical span at residues 616 to 636 (LVAILLCIVILLVTVVLFAAL). Over 637 to 790 (RRQRKKEPLI…YGGVDSDKDS (154 aa)) the chain is Cytoplasmic. Residues serine 786 and serine 790 each carry the phosphoserine modification.

In terms of tissue distribution, highly expressed in brain, cerebellum, and kidney. Lung, pancreas, and gastric mucosa show a weak expression. Also expressed in certain liver and kidney carcinomas.

The protein localises to the cell membrane. Cadherins are calcium-dependent cell adhesion proteins. They preferentially interact with themselves in a homophilic manner in connecting cells; cadherins may thus contribute to the sorting of heterogeneous cell types. This is Cadherin-6 (CDH6) from Homo sapiens (Human).